We begin with the raw amino-acid sequence, 268 residues long: Orotidine 5'-phosphate decarboxylase (268 aa).

Residues Asp38, 60 to 62, 92 to 101, Tyr218, and Arg236 contribute to the substrate site; these read KTH and DRKFADIGNT. The active-site Proton donor is the Lys94.

It belongs to the OMP decarboxylase family.

The enzyme catalyses orotidine 5'-phosphate + H(+) = UMP + CO2. Its pathway is pyrimidine metabolism; UMP biosynthesis via de novo pathway; UMP from orotate: step 2/2. This Candida parapsilosis (Yeast) protein is Orotidine 5'-phosphate decarboxylase (URA3).